We begin with the raw amino-acid sequence, 27 residues long: Cupiennin-4b (27 aa).

Glutamine amide is present on glutamine 27.

Expressed by the venom gland.

The protein resides in the secreted. The chain is Cupiennin-4b from Cupiennius salei (American wandering spider).